A 105-amino-acid polypeptide reads, in one-letter code: Diuretic hormone class 2 (105 aa).

The signal sequence occupies residues 1–23 (MTVLCTLMAFVMVVAISSLTVDA). The propeptide occupies 24–63 (IPHSHESYWDQQDDIDRDEFLELLSRLSRTVMNRPEMENS). Proline amide is present on P96. A propeptide spanning residues 101 to 105 (RSEQA) is cleaved from the precursor.

Expressed in central brain, antennal lobes, retrocerebral complex and gnathal, thoracic and abdominal ganglia but not in optical lobes (at protein level).

The protein resides in the secreted. In terms of biological role, regulation of fluid secretion. Stimulates Malpighian tubules fluid secretion. The polypeptide is Diuretic hormone class 2 (Camponotus floridanus (Florida carpenter ant)).